The following is a 590-amino-acid chain: Pescadillo homolog (590 aa).

Residues 332 to 422 form the BRCT domain; sequence VCKSLFKDLK…IILPTEKYLV (91 aa). Residues 561 to 590 are disordered; it reads AMKISQSRKRSGVEIIEQRKKRLNDTQPSS.

Belongs to the pescadillo family. Interacts with BOP1 and WDR12. Interacts with NSN1. Expressed in shoot and root apical meristems, epidermal cells and vasculature of developing leaves, trichome progenitor cells, young flowers, developing pollen grains and ovules, and mature pollen grains.

It localises to the nucleus. The protein localises to the nucleolus. Its subcellular location is the nucleoplasm. Functionally, required for maturation of ribosomal RNAs and formation of the large ribosomal subunit. Plays an essential role in cell growth and survival through its regulation of ribosome biogenesis and mitotic progression. Required for normal root cell growth and differentiation. The polypeptide is Pescadillo homolog (Arabidopsis thaliana (Mouse-ear cress)).